Reading from the N-terminus, the 318-residue chain is Curved DNA-binding protein (318 aa).

The J domain occupies 5–69; that stretch reads DYYKILGVEP…QKRAEFDEIR (65 aa). The tract at residues 111-130 is disordered; that stretch reads GGGNPFGGARQQQRSAGRRG.

The protein localises to the cytoplasm. Its subcellular location is the nucleoid. Its function is as follows. DNA-binding protein that preferentially recognizes a curved DNA sequence. It is probably a functional analog of DnaJ; displays overlapping activities with DnaJ, but functions under different conditions, probably acting as a molecular chaperone in an adaptive response to environmental stresses other than heat shock. Lacks autonomous chaperone activity; binds native substrates and targets them for recognition by DnaK. Its activity is inhibited by the binding of CbpM. The chain is Curved DNA-binding protein from Pseudomonas putida (strain GB-1).